A 141-amino-acid chain; its full sequence is Nucleoside diphosphate kinase (141 aa).

Residues lysine 11, phenylalanine 59, arginine 87, threonine 93, arginine 104, and asparagine 114 each contribute to the ATP site. The Pros-phosphohistidine intermediate role is filled by histidine 117.

The protein belongs to the NDK family. In terms of assembly, homotetramer. The cofactor is Mg(2+).

Its subcellular location is the cytoplasm. The catalysed reaction is a 2'-deoxyribonucleoside 5'-diphosphate + ATP = a 2'-deoxyribonucleoside 5'-triphosphate + ADP. The enzyme catalyses a ribonucleoside 5'-diphosphate + ATP = a ribonucleoside 5'-triphosphate + ADP. Its function is as follows. Major role in the synthesis of nucleoside triphosphates other than ATP. The ATP gamma phosphate is transferred to the NDP beta phosphate via a ping-pong mechanism, using a phosphorylated active-site intermediate. The chain is Nucleoside diphosphate kinase from Teredinibacter turnerae (strain ATCC 39867 / T7901).